A 512-amino-acid polypeptide reads, in one-letter code: Maturase K (512 aa).

This sequence belongs to the intron maturase 2 family. MatK subfamily.

It is found in the plastid. The protein localises to the chloroplast. In terms of biological role, usually encoded in the trnK tRNA gene intron. Probably assists in splicing its own and other chloroplast group II introns. In Lilium longiflorum (Trumpet lily), this protein is Maturase K.